Consider the following 728-residue polypeptide: MVKFLEPTANEIKENKLYQDMGLSDKEYDKVVDILGRMPNYTEIGIFSVMWSEHCSYKHSKPFLKQFPTTGERVLMGPGEGAGVVDIGDNQAVVFKVESHNHPSAIEPYQGAATGVGGIVRDIVSIGARPIQLLNSLRFGELTEKQNQRLFKGVVAGIGGYGNCIGIPTVAGEIEFDRQYEGNPLVNAMCVGIIDHDKIQKGTAKGEGNPVIYVGLKTGRDGIHGATFASEELSEESESKRPSVQIGDPFVGKKLMEATLKAITFPELVGIQDMGAAGLTSSSSEMAAKGGSGIHLELEKVPTREAGISPYEMMLSETQERMLLVVEKGTEQKFLDLFDHYELDSAVIGQVTDTDRFVLTYEGEVFADIPVQPLSDEAPVYILEGRAAQFDAVNHDYSNIDAQDTLMKLLSHPTMASKNWAYSQYDQQVGANTIIKPGLSAGVTRVEGTKKAIAATLDGEARYVFNNPYEGGKMVVAEAYRNLISVGSLPLAMTDCLNYGNPEKPEIYQQLADSTRGMAEACGALNTPVVSGNVSLYNETKGDAIFPTPVVGMVGLIEDVDYLVDFKPSKGDTIYFVGEVKPDFGGSQLEKLLFNEVAHTDVAIDLEQEVARGEAIRQHIIDGKLGHVQAVGKGGVGVKLAQIAAYFNTGLEAQLDVSDAELFAETQGNYIVIAKQGKEIDIDGAEAIGTFGTESFKLSTNQGEVTLDVNRMTEAWKGAIHACMTSEV.

H54 is a catalytic residue. Residues Y57 and K96 each contribute to the ATP site. E98 serves as a coordination point for Mg(2+). Substrate-binding positions include 99-102 (SHNH) and R121. The active-site Proton acceptor is H100. D122 lines the Mg(2+) pocket. Position 245 (Q245) interacts with substrate. D273 provides a ligand contact to Mg(2+). Residue 317-319 (ETQ) coordinates substrate. ATP is bound by residues D495 and G532. N533 is a binding site for Mg(2+). Residue S535 coordinates substrate.

Belongs to the FGAMS family. In terms of assembly, monomer. Part of the FGAM synthase complex composed of 1 PurL, 1 PurQ and 2 PurS subunits.

The protein resides in the cytoplasm. The catalysed reaction is N(2)-formyl-N(1)-(5-phospho-beta-D-ribosyl)glycinamide + L-glutamine + ATP + H2O = 2-formamido-N(1)-(5-O-phospho-beta-D-ribosyl)acetamidine + L-glutamate + ADP + phosphate + H(+). The protein operates within purine metabolism; IMP biosynthesis via de novo pathway; 5-amino-1-(5-phospho-D-ribosyl)imidazole from N(2)-formyl-N(1)-(5-phospho-D-ribosyl)glycinamide: step 1/2. Its function is as follows. Part of the phosphoribosylformylglycinamidine synthase complex involved in the purines biosynthetic pathway. Catalyzes the ATP-dependent conversion of formylglycinamide ribonucleotide (FGAR) and glutamine to yield formylglycinamidine ribonucleotide (FGAM) and glutamate. The FGAM synthase complex is composed of three subunits. PurQ produces an ammonia molecule by converting glutamine to glutamate. PurL transfers the ammonia molecule to FGAR to form FGAM in an ATP-dependent manner. PurS interacts with PurQ and PurL and is thought to assist in the transfer of the ammonia molecule from PurQ to PurL. The sequence is that of Phosphoribosylformylglycinamidine synthase subunit PurL from Macrococcus caseolyticus (strain JCSC5402) (Macrococcoides caseolyticum).